A 382-amino-acid polypeptide reads, in one-letter code: UDP-4-amino-4-deoxy-L-arabinose--oxoglutarate aminotransferase (382 aa).

N6-(pyridoxal phosphate)lysine is present on Lys182.

It belongs to the DegT/DnrJ/EryC1 family. ArnB subfamily. As to quaternary structure, homodimer. Requires pyridoxal 5'-phosphate as cofactor.

It carries out the reaction UDP-4-amino-4-deoxy-beta-L-arabinose + 2-oxoglutarate = UDP-beta-L-threo-pentopyranos-4-ulose + L-glutamate. The protein operates within nucleotide-sugar biosynthesis; UDP-4-deoxy-4-formamido-beta-L-arabinose biosynthesis; UDP-4-deoxy-4-formamido-beta-L-arabinose from UDP-alpha-D-glucuronate: step 2/3. It participates in bacterial outer membrane biogenesis; lipopolysaccharide biosynthesis. Its function is as follows. Catalyzes the conversion of UDP-4-keto-arabinose (UDP-Ara4O) to UDP-4-amino-4-deoxy-L-arabinose (UDP-L-Ara4N). The modified arabinose is attached to lipid A and is required for resistance to polymyxin and cationic antimicrobial peptides. The protein is UDP-4-amino-4-deoxy-L-arabinose--oxoglutarate aminotransferase of Yersinia enterocolitica serotype O:8 / biotype 1B (strain NCTC 13174 / 8081).